Reading from the N-terminus, the 200-residue chain is Shikimate kinase (200 aa).

Residue 41-46 participates in ATP binding; it reads GVGKSS. Ser-45 lines the Mg(2+) pocket. Residues Asp-63, Arg-87, and Gly-109 each coordinate substrate. Arg-147 is a binding site for ATP. A substrate-binding site is contributed by Arg-166.

Belongs to the shikimate kinase family. In terms of assembly, monomer. Mg(2+) is required as a cofactor.

The protein resides in the cytoplasm. The catalysed reaction is shikimate + ATP = 3-phosphoshikimate + ADP + H(+). The protein operates within metabolic intermediate biosynthesis; chorismate biosynthesis; chorismate from D-erythrose 4-phosphate and phosphoenolpyruvate: step 5/7. Its function is as follows. Catalyzes the specific phosphorylation of the 3-hydroxyl group of shikimic acid using ATP as a cosubstrate. The polypeptide is Shikimate kinase (Caulobacter vibrioides (strain NA1000 / CB15N) (Caulobacter crescentus)).